A 173-amino-acid polypeptide reads, in one-letter code: Adenine phosphoribosyltransferase (173 aa).

The protein belongs to the purine/pyrimidine phosphoribosyltransferase family. As to quaternary structure, homodimer.

It is found in the cytoplasm. It carries out the reaction AMP + diphosphate = 5-phospho-alpha-D-ribose 1-diphosphate + adenine. It participates in purine metabolism; AMP biosynthesis via salvage pathway; AMP from adenine: step 1/1. Its function is as follows. Catalyzes a salvage reaction resulting in the formation of AMP, that is energically less costly than de novo synthesis. The protein is Adenine phosphoribosyltransferase of Caldanaerobacter subterraneus subsp. tengcongensis (strain DSM 15242 / JCM 11007 / NBRC 100824 / MB4) (Thermoanaerobacter tengcongensis).